The sequence spans 134 residues: Ribonuclease P protein component (134 aa).

This sequence belongs to the RnpA family. Consists of a catalytic RNA component (M1 or rnpB) and a protein subunit.

The catalysed reaction is Endonucleolytic cleavage of RNA, removing 5'-extranucleotides from tRNA precursor.. Its function is as follows. RNaseP catalyzes the removal of the 5'-leader sequence from pre-tRNA to produce the mature 5'-terminus. It can also cleave other RNA substrates such as 4.5S RNA. The protein component plays an auxiliary but essential role in vivo by binding to the 5'-leader sequence and broadening the substrate specificity of the ribozyme. The chain is Ribonuclease P protein component from Pseudomonas putida (strain GB-1).